A 198-amino-acid chain; its full sequence is TATA-box-binding protein (198 aa).

2 repeat units span residues 14 to 90 (IENI…IKTL) and 105 to 181 (IQNI…FDKL).

This sequence belongs to the TBP family.

In terms of biological role, general factor that plays a role in the activation of archaeal genes transcribed by RNA polymerase. Binds specifically to the TATA box promoter element which lies close to the position of transcription initiation. This chain is TATA-box-binding protein, found in Saccharolobus shibatae (strain ATCC 51178 / DSM 5389 / JCM 8931 / NBRC 15437 / B12) (Sulfolobus shibatae).